We begin with the raw amino-acid sequence, 506 residues long: Galactose/methyl galactoside import ATP-binding protein MglA (506 aa).

ABC transporter domains follow at residues 14 to 249 (LEMK…VGRS) and 264 to 506 (VMLE…SLYL). 46-53 (GENGAGKS) provides a ligand contact to ATP.

The protein belongs to the ABC transporter superfamily. Galactose/methyl galactoside importer (TC 3.A.1.2.3) family. As to quaternary structure, the complex is composed of one ATP-binding protein (MglA), two transmembrane proteins (MglC) and a solute-binding protein (MglB).

Its subcellular location is the cell inner membrane. The catalysed reaction is D-galactose(out) + ATP + H2O = D-galactose(in) + ADP + phosphate + H(+). It carries out the reaction methyl beta-D-galactoside(out) + ATP + H2O = methyl beta-D-galactoside(in) + ADP + phosphate + H(+). Its function is as follows. Part of the ABC transporter complex MglABC involved in galactose/methyl galactoside import. Responsible for energy coupling to the transport system. The polypeptide is Galactose/methyl galactoside import ATP-binding protein MglA (Sodalis glossinidius (strain morsitans)).